The sequence spans 425 residues: 5-hydroxytryptamine receptor 7 (425 aa).

Residues 1-72 are Extracellular-facing; that stretch reads MLIQVQPSHL…LLYGDTEKIV (72 aa). Residues asparagine 14, asparagine 41, and asparagine 51 are each glycosylated (N-linked (GlcNAc...) asparagine). A helical membrane pass occupies residues 73-97; that stretch reads IGVVLSIITLFTIAGNALVIISVCI. Over 98 to 107 the chain is Cytoplasmic; it reads VKKLRQPSNY. The helical transmembrane segment at 108-129 threads the bilayer; sequence LVVSLAAADLSVAVAVMPFVII. At 130 to 141 the chain is on the extracellular side; that stretch reads TDLVGGEWLFGK. Residues 142 to 167 traverse the membrane as a helical segment; that stretch reads VFCNVFIAMDVMCCTASIMTLCVISV. A disulfide bridge connects residues cysteine 144 and cysteine 220. Aspartate 151 is a binding site for serotonin. Topologically, residues 168-187 are cytoplasmic; that stretch reads DRYLGITRPLTYPARQNGKL. The chain crosses the membrane as a helical span at residues 188-208; it reads MAKMVFIVWLLSASITLPPLF. The Extracellular portion of the chain corresponds to 209-226; it reads GWAKNVNVERVCLISQDF. The chain crosses the membrane as a helical span at residues 227–249; the sequence is GYTVYSTAVAFYIPMTVMLVMYQ. Residues 250-322 lie on the Cytoplasmic side of the membrane; it reads RIFVAAKISA…SIFKREQKAA (73 aa). Residues 323–348 traverse the membrane as a helical segment; that stretch reads RTLGIIVGAFTFCWLPFFLLSTARPF. Topologically, residues 349-359 are extracellular; the sequence is ICGIMCSCMPL. Residues 360-383 form a helical membrane-spanning segment; it reads RLERTLLWLGYTNSLINPLIYAFF. Topologically, residues 384–425 are cytoplasmic; sequence NRDLRTTFWNLLRCKYTNINRRLSAASMHEALKVTERHEGIL. Residue cysteine 397 is the site of S-palmitoyl cysteine attachment.

This sequence belongs to the G-protein coupled receptor 1 family.

It is found in the cell membrane. G-protein coupled receptor for 5-hydroxytryptamine (serotonin), a biogenic hormone that functions as a neurotransmitter, a hormone and a mitogen. Ligand binding causes a conformation change that triggers signaling via guanine nucleotide-binding proteins (G proteins) and modulates the activity of downstream effectors. HTR7 is coupled to G(s) G alpha proteins and mediates activation of adenylate cyclase activity. The protein is 5-hydroxytryptamine receptor 7 (htr7) of Xenopus laevis (African clawed frog).